Here is a 212-residue protein sequence, read N- to C-terminus: Imidazole glycerol phosphate synthase subunit HisH 2 (212 aa).

Residues 3 to 212 (RVAIIDYGIN…LMSNFLQWNP (210 aa)) enclose the Glutamine amidotransferase type-1 domain. Catalysis depends on Cys82, which acts as the Nucleophile. Residues His192 and Glu194 contribute to the active site.

Heterodimer of HisH and HisF.

It localises to the cytoplasm. It catalyses the reaction 5-[(5-phospho-1-deoxy-D-ribulos-1-ylimino)methylamino]-1-(5-phospho-beta-D-ribosyl)imidazole-4-carboxamide + L-glutamine = D-erythro-1-(imidazol-4-yl)glycerol 3-phosphate + 5-amino-1-(5-phospho-beta-D-ribosyl)imidazole-4-carboxamide + L-glutamate + H(+). The catalysed reaction is L-glutamine + H2O = L-glutamate + NH4(+). The protein operates within amino-acid biosynthesis; L-histidine biosynthesis; L-histidine from 5-phospho-alpha-D-ribose 1-diphosphate: step 5/9. Functionally, IGPS catalyzes the conversion of PRFAR and glutamine to IGP, AICAR and glutamate. The HisH subunit provides the glutamine amidotransferase activity that produces the ammonia necessary to HisF for the synthesis of IGP and AICAR. This chain is Imidazole glycerol phosphate synthase subunit HisH 2, found in Nitrobacter winogradskyi (strain ATCC 25391 / DSM 10237 / CIP 104748 / NCIMB 11846 / Nb-255).